Reading from the N-terminus, the 67-residue chain is Guanine nucleotide-binding protein G(I)/G(S)/G(O) subunit gamma-13 (67 aa).

Cysteine methyl ester is present on C64. C64 carries the S-farnesyl cysteine lipid modification. Residues 65–67 (TIL) constitute a propeptide, removed in mature form.

It belongs to the G protein gamma family. In terms of assembly, g proteins are composed of 3 units, alpha, beta and gamma.

It is found in the cell membrane. Guanine nucleotide-binding proteins (G proteins) are involved as a modulator or transducer in various transmembrane signaling systems. The beta and gamma chains are required for the GTPase activity, for replacement of GDP by GTP, and for G protein-effector interaction. This Homo sapiens (Human) protein is Guanine nucleotide-binding protein G(I)/G(S)/G(O) subunit gamma-13 (GNG13).